Reading from the N-terminus, the 250-residue chain is Triosephosphate isomerase (250 aa).

Position 9 to 11 (9 to 11) interacts with substrate; it reads NWK. Histidine 96 acts as the Electrophile in catalysis. Glutamate 168 serves as the catalytic Proton acceptor. Substrate-binding positions include glycine 174, serine 216, and 237–238; that span reads GG.

This sequence belongs to the triosephosphate isomerase family. As to quaternary structure, homodimer.

Its subcellular location is the cytoplasm. The enzyme catalyses D-glyceraldehyde 3-phosphate = dihydroxyacetone phosphate. The protein operates within carbohydrate biosynthesis; gluconeogenesis. It functions in the pathway carbohydrate degradation; glycolysis; D-glyceraldehyde 3-phosphate from glycerone phosphate: step 1/1. Its function is as follows. Involved in the gluconeogenesis. Catalyzes stereospecifically the conversion of dihydroxyacetone phosphate (DHAP) to D-glyceraldehyde-3-phosphate (G3P). The protein is Triosephosphate isomerase of Leptospira borgpetersenii serovar Hardjo-bovis (strain JB197).